The sequence spans 991 residues: Pentatricopeptide repeat-containing protein At1g73710 (991 aa).

Disordered stretches follow at residues 1–27 and 61–81; these read MLQP…HHHH and SSSS…RKRK. Over residues 15–27 the composition is skewed to basic residues; the sequence is VRHHHHHHHHHHH. Positions 61–73 are enriched in low complexity; sequence SSSSVSPPRCSKP. PPR repeat units lie at residues 144–178, 179–213, 214–248, 304–338, 339–373, 374–408, 409–443, 444–474, 478–513, 514–548, 549–583, 584–618, 619–653, 654–688, 689–719, 723–757, 758–792, 862–896, and 897–931; these read NVIH…GVLP, TNNT…MHFP, DEVT…KVDL, LTST…GVPI, DTVT…GISP, DTKT…GLFP, DTVT…SIRI, DEHS…FQLD, SSTT…GQRN, DVLE…GTWP, DECT…GCKP, GCKT…GVKP, NEVV…GVQS, NHIV…EGGP, DVAA…LREK, DVIS…GLLS, DCTS…RKLL, EHFA…GLEP, and DIVT…ELEP. Positions 965–974 are enriched in basic and acidic residues; sequence AERECSSRSG. Residues 965–991 are disordered; sequence AERECSSRSGEEEEDDEEENSEEDEAF. A compositionally biased stretch (acidic residues) spans 975-991; the sequence is EEEEDDEEENSEEDEAF.

It belongs to the PPR family. P subfamily.

The sequence is that of Pentatricopeptide repeat-containing protein At1g73710 from Arabidopsis thaliana (Mouse-ear cress).